A 901-amino-acid chain; its full sequence is Sperm-associated antigen 1 (901 aa).

3 TPR repeats span residues 213–246, 247–279, and 280–313; these read ANRE…LPTA, IAYN…DPGN, and VKAL…EPDN. The interval 322–437 is disordered; that stretch reads EVERDLKNSE…DNPSGLKRRG (116 aa). Residues S351 and S359 each carry the phosphoserine modification. TPR repeat units lie at residues 430–464, 472–505, 507–539, 606–639, and 640–673; these read PSGL…EPTG, SILY…HPFS, KPLL…DCGI, FQAL…NSKA, and CAIY…DGEN. The interval 694–776 is disordered; it reads GVDPSQVLLS…AEPAEKLDVS (83 aa). Position 703 is a phosphoserine (S703). Basic and acidic residues predominate over residues 708-717; sequence EAARHLDTKN. 2 positions are modified to phosphoserine: S739 and S740. 756-763 lines the GTP pocket; it reads PARDGVED. S766 bears the Phosphoserine mark.

In terms of tissue distribution, detected in cerebellum, tongue, esophagus, forestomach, sperm and testis.

The protein localises to the cytoplasm. Its subcellular location is the dynein axonemal particle. May play a role in the cytoplasmic assembly of the ciliary dynein arms. May play a role in fertilization. Binds GTP and has GTPase activity. The sequence is that of Sperm-associated antigen 1 (Spag1) from Mus musculus (Mouse).